The sequence spans 140 residues: Probable prefoldin subunit 6 (140 aa).

The protein belongs to the prefoldin subunit beta family. As to quaternary structure, heterohexamer of two PFD-alpha type and four PFD-beta type subunits.

In terms of biological role, binds specifically to cytosolic chaperonin (c-CPN) and transfers target proteins to it. Binds to nascent polypeptide chain and promotes folding in an environment in which there are many competing pathways for nonnative proteins. The sequence is that of Probable prefoldin subunit 6 (pfdn6) from Dictyostelium discoideum (Social amoeba).